A 214-amino-acid polypeptide reads, in one-letter code: Holliday junction branch migration complex subunit RuvA (214 aa).

Residues 1–64 are domain I; that stretch reads MITRIRGEML…EDAMTLYGFT (64 aa). The segment at 65 to 143 is domain II; that stretch reads SGEQLAVFEL…DITSKDAYQD (79 aa). A flexible linker region spans residues 144-160; that stretch reads ISASEKLDNTGEKLGIS. Residues 161–214 are domain III; sequence TRHKHLDELKAALSSLGYTNREIEKTVDAIQGQITEGQDMEELLRLALQKLNTK.

Belongs to the RuvA family. Homotetramer. Forms an RuvA(8)-RuvB(12)-Holliday junction (HJ) complex. HJ DNA is sandwiched between 2 RuvA tetramers; dsDNA enters through RuvA and exits via RuvB. An RuvB hexamer assembles on each DNA strand where it exits the tetramer. Each RuvB hexamer is contacted by two RuvA subunits (via domain III) on 2 adjacent RuvB subunits; this complex drives branch migration. In the full resolvosome a probable DNA-RuvA(4)-RuvB(12)-RuvC(2) complex forms which resolves the HJ.

It is found in the cytoplasm. The RuvA-RuvB-RuvC complex processes Holliday junction (HJ) DNA during genetic recombination and DNA repair, while the RuvA-RuvB complex plays an important role in the rescue of blocked DNA replication forks via replication fork reversal (RFR). RuvA specifically binds to HJ cruciform DNA, conferring on it an open structure. The RuvB hexamer acts as an ATP-dependent pump, pulling dsDNA into and through the RuvAB complex. HJ branch migration allows RuvC to scan DNA until it finds its consensus sequence, where it cleaves and resolves the cruciform DNA. The sequence is that of Holliday junction branch migration complex subunit RuvA from Natranaerobius thermophilus (strain ATCC BAA-1301 / DSM 18059 / JW/NM-WN-LF).